The primary structure comprises 57 residues: Stress response protein (57 aa).

The Nuclear localization signal signature appears at 6–10 (RKERR).

Mesophyll protoplasts.

The protein localises to the nucleus. Stress response. May play a role in the reentering of protoplasts into the cell cycle. The protein is Stress response protein of Nicotiana sylvestris (Wood tobacco).